A 695-amino-acid polypeptide reads, in one-letter code: Potassium voltage-gated channel subfamily KQT member 4 (695 aa).

The tract at residues 1–21 is disordered; sequence MAEAPPRRLGLGPPPGDAPRA. At 1–96 the chain is on the cytoplasmic side; sequence MAEAPPRRLG…VYNVLERPRG (96 aa). R93 contacts a 1,2-diacyl-sn-glycero-3-phospho-(1D-myo-inositol-4,5-bisphosphate). A helical transmembrane segment spans residues 97 to 118; that stretch reads WAFVYHVFIFLLVFSCLVLSVL. Topologically, residues 119–129 are extracellular; that stretch reads STIQEHQELAN. A helical membrane pass occupies residues 130 to 152; sequence ECLLILEFVMIVVFGLEYIIRVW. Over 153 to 168 the chain is Cytoplasmic; the sequence is SAGCCCRYRGWQGRFR. Residues 169–191 form a helical membrane-spanning segment; the sequence is FARKPFCVIDFIVFVASVAVIAA. K172 is an a 1,2-diacyl-sn-glycero-3-phospho-(1D-myo-inositol-4,5-bisphosphate) binding site. Over 192 to 202 the chain is Extracellular; that stretch reads GTQGNIFATSA. A helical; Voltage-sensor transmembrane segment spans residues 203–223; sequence LRSMRFLQILRMVRMDRRGGT. Positions 219, 220, 225, and 235 each coordinate a 1,2-diacyl-sn-glycero-3-phospho-(1D-myo-inositol-4,5-bisphosphate). Over 224-235 the chain is Cytoplasmic; it reads WKLLGSVVYAHS. The helical transmembrane segment at 236-258 threads the bilayer; the sequence is KELITAWYIGFLVLIFASFLVYL. Topologically, residues 259–270 are extracellular; sequence AEKDANSDFSSY. Residues 271 to 292 constitute an intramembrane region (pore-forming); that stretch reads ADSLWWGTITLTTIGYGDKTPH. A topological domain (extracellular) is located at residue T293. A helical membrane pass occupies residues 294–322; sequence WLGRVLAAGFALLGISFFALPAGILGSGF. Over 323–695 the chain is Cytoplasmic; it reads ALKVQEQHRQ…ISRSVSTNMD (373 aa). Residues H330 and K333 each coordinate a 1,2-diacyl-sn-glycero-3-phospho-(1D-myo-inositol-4,5-bisphosphate). Residues 342–351 form an interaction with CALM region; it reads AANLIQAAWR. Positions 441–483 are disordered; that stretch reads RMSSSQKRTGPSKQHLAPPPIPTSPSSEQVGEASSPSKVQKSW. Polar residues-rich tracts occupy residues 442–452 and 464–483; these read MSSSQKRTGPS and SPSSEQVGEASSPSKVQKSW. The tract at residues 535–549 is interaction with CALM; sequence RSVRILKFLVAKRKF. Positions 546-650 are C-terminal assembly domain (tetramerization); sequence KRKFKETLRP…SRCLRSGTSA (105 aa). The interval 588–608 is disordered; the sequence is GRGPGDRKTREKGDKGPSDTE. Residues 591–605 are compositionally biased toward basic and acidic residues; that stretch reads PGDRKTREKGDKGPS.

The protein belongs to the potassium channel family. KQT (TC 1.A.1.15) subfamily. Kv7.4/KCNQ4 sub-subfamily. Homotetramer. Interacts (via C-terminus) with calmodulin; forms a heterooctameric structure (with 4:4 KCNQ1:CALM stoichiometry); the interaction is calcium-independent, constitutive, participates in the proper assembly of a functional channel. The interaction with calcium-free CALM controls channel trafficking whereas interaction with calcium-bound CALM regulates channel gating. May form a functional heteromultimeric channel with KCNQ3. Interacts with HSP90AB1; promotes cell surface expression of KCNQ4. Expressed in both the inner (IHCs) and the outer hair cells (OHCs) of the cochlea. Reciprocal longitudinal gradients of expression is present in IHCs and OHCs. The strongest expression in IHCs is in the base of the cochlea and in the apex for OHCs. A basal to apical gradient of expression is also present in both type I and type II spiral ganglion cells.

It is found in the basal cell membrane. The enzyme catalyses K(+)(in) = K(+)(out). Two molecules of phosphatidylinositol-4,5-bisphosphate (PIP2-I and PIP2-II) are essential to activate KCNQ4 channel by inducing the coupling of the voltage-sensing domain (VSD) and the pore-forming domain (PD). Upon channel activation, PIP2-I and PIP2-II disrupt the VSD-calmodulin/CALM interaction, causing the release of CALM from the VSD which triggers the opening of the gate. Calcium suppresses KCNQ4 channel current through calcium-bound CALM C-terminus. Therefore CALM acts as calcium sensor that controls channel activity. Functionally, pore-forming subunit of the voltage-gated potassium (Kv) channel involved in the regulation of sensory cells excitability in the cochlea. KCNQ4/Kv7.4 channel is composed of 4 pore-forming subunits assembled as tetramers. Promotes the outflow of potassium ions in the repolarization phase of action potential which plays a role in regulating membrane potential of excitable cells. The channel conducts a slowly activating and deactivating current. Current often shows some inward rectification at positive potentials. Channel may be selectively permeable in vitro to other cations besides potassium, in decreasing order of affinity K(+) = Rb(+) &gt; Cs(+) &gt; Na(+). Important for normal physiological function of inner ear such as sensory perception of sound. This Rattus norvegicus (Rat) protein is Potassium voltage-gated channel subfamily KQT member 4.